The following is a 1074-amino-acid chain: Carbamoyl phosphate synthase large chain (1074 aa).

The tract at residues 1–399 is carboxyphosphate synthetic domain; sequence MPKRSDIKKV…ALMKAIRSLD (399 aa). ATP contacts are provided by R129, R169, G175, G176, E208, V210, E215, G241, I242, H243, Q284, and E296. The ATP-grasp 1 domain occupies 133-325; that stretch reads KKAMERIGEP…IARVTAKIAI (193 aa). Mg(2+) is bound by residues Q284, E296, and N298. Positions 284, 296, and 298 each coordinate Mn(2+). The interval 400–543 is oligomerization domain; it reads IDIDLGYNGK…YSTYDEECEL (144 aa). The segment at 544–933 is carbamoyl phosphate synthetic domain; the sequence is NPSDNKKVLI…FKAEMSAENN (390 aa). The region spanning 674–865 is the ATP-grasp 2 domain; it reads NKLLNKLGIP…LAKIAAKVMA (192 aa). ATP is bound by residues R710, D749, L751, E756, G781, I782, H783, S784, Q824, and E836. 3 residues coordinate Mg(2+): Q824, E836, and N838. Residues Q824, E836, and N838 each contribute to the Mn(2+) site. The MGS-like domain maps to 932–1074; the sequence is NNLPLDGIVF…YHREVRYRAL (143 aa). Residues 934–1074 form an allosteric domain region; it reads LPLDGIVFIS…YHREVRYRAL (141 aa).

This sequence belongs to the CarB family. Composed of two chains; the small (or glutamine) chain promotes the hydrolysis of glutamine to ammonia, which is used by the large (or ammonia) chain to synthesize carbamoyl phosphate. Tetramer of heterodimers (alpha,beta)4. The cofactor is Mg(2+). Requires Mn(2+) as cofactor.

The enzyme catalyses hydrogencarbonate + L-glutamine + 2 ATP + H2O = carbamoyl phosphate + L-glutamate + 2 ADP + phosphate + 2 H(+). It carries out the reaction hydrogencarbonate + NH4(+) + 2 ATP = carbamoyl phosphate + 2 ADP + phosphate + 2 H(+). Its pathway is amino-acid biosynthesis; L-arginine biosynthesis; carbamoyl phosphate from bicarbonate: step 1/1. The protein operates within pyrimidine metabolism; UMP biosynthesis via de novo pathway; (S)-dihydroorotate from bicarbonate: step 1/3. Its function is as follows. Large subunit of the glutamine-dependent carbamoyl phosphate synthetase (CPSase). CPSase catalyzes the formation of carbamoyl phosphate from the ammonia moiety of glutamine, carbonate, and phosphate donated by ATP, constituting the first step of 2 biosynthetic pathways, one leading to arginine and/or urea and the other to pyrimidine nucleotides. The large subunit (synthetase) binds the substrates ammonia (free or transferred from glutamine from the small subunit), hydrogencarbonate and ATP and carries out an ATP-coupled ligase reaction, activating hydrogencarbonate by forming carboxy phosphate which reacts with ammonia to form carbamoyl phosphate. The polypeptide is Carbamoyl phosphate synthase large chain (Methanothrix thermoacetophila (strain DSM 6194 / JCM 14653 / NBRC 101360 / PT) (Methanosaeta thermophila)).